A 49-amino-acid chain; its full sequence is Large ribosomal subunit protein bL33B (49 aa).

The protein belongs to the bacterial ribosomal protein bL33 family.

The chain is Large ribosomal subunit protein bL33B from Bacillus pumilus (strain SAFR-032).